Consider the following 364-residue polypeptide: tRNA/tmRNA (uracil-C(5))-methyltransferase (364 aa).

Positions 189, 216, 221, 237, and 297 each coordinate S-adenosyl-L-methionine. Residue C322 is the Nucleophile of the active site. E356 (proton acceptor) is an active-site residue.

Belongs to the class I-like SAM-binding methyltransferase superfamily. RNA M5U methyltransferase family. TrmA subfamily.

The catalysed reaction is uridine(54) in tRNA + S-adenosyl-L-methionine = 5-methyluridine(54) in tRNA + S-adenosyl-L-homocysteine + H(+). The enzyme catalyses uridine(341) in tmRNA + S-adenosyl-L-methionine = 5-methyluridine(341) in tmRNA + S-adenosyl-L-homocysteine + H(+). In terms of biological role, dual-specificity methyltransferase that catalyzes the formation of 5-methyluridine at position 54 (m5U54) in all tRNAs, and that of position 341 (m5U341) in tmRNA (transfer-mRNA). The protein is tRNA/tmRNA (uracil-C(5))-methyltransferase of Campylobacter curvus (strain 525.92).